The primary structure comprises 196 residues: GTP cyclohydrolase-2 (196 aa).

Position 49 to 53 (49 to 53) interacts with GTP; sequence RVHSE. Positions 54, 65, and 67 each coordinate Zn(2+). Residues Gln70, 92–94, and Thr114 each bind GTP; that span reads EGR. Catalysis depends on Asp126, which acts as the Proton acceptor. The active-site Nucleophile is Arg128. The GTP site is built by Thr149 and Lys154.

This sequence belongs to the GTP cyclohydrolase II family. As to quaternary structure, homodimer. Zn(2+) is required as a cofactor.

The enzyme catalyses GTP + 4 H2O = 2,5-diamino-6-hydroxy-4-(5-phosphoribosylamino)-pyrimidine + formate + 2 phosphate + 3 H(+). It functions in the pathway cofactor biosynthesis; riboflavin biosynthesis; 5-amino-6-(D-ribitylamino)uracil from GTP: step 1/4. Catalyzes the conversion of GTP to 2,5-diamino-6-ribosylamino-4(3H)-pyrimidinone 5'-phosphate (DARP), formate and pyrophosphate. This is GTP cyclohydrolase-2 from Escherichia coli O45:K1 (strain S88 / ExPEC).